A 382-amino-acid chain; its full sequence is D-galactonate dehydratase (382 aa).

Asp-183 is a Mg(2+) binding site. The active-site Proton donor is His-185. Residues Glu-209 and Glu-235 each contribute to the Mg(2+) site. His-285 serves as the catalytic Proton acceptor. Positions 361–382 (NENPPDWRNPVWRHSDGSIAEW) are disordered.

This sequence belongs to the mandelate racemase/muconate lactonizing enzyme family. GalD subfamily. Mg(2+) is required as a cofactor.

It catalyses the reaction D-galactonate = 2-dehydro-3-deoxy-D-galactonate + H2O. It participates in carbohydrate acid metabolism; D-galactonate degradation; D-glyceraldehyde 3-phosphate and pyruvate from D-galactonate: step 1/3. In terms of biological role, catalyzes the dehydration of D-galactonate to 2-keto-3-deoxy-D-galactonate. The sequence is that of D-galactonate dehydratase from Xanthomonas euvesicatoria pv. vesicatoria (strain 85-10) (Xanthomonas campestris pv. vesicatoria).